The sequence spans 291 residues: Formamidopyrimidine-DNA glycosylase (291 aa).

Pro2 acts as the Schiff-base intermediate with DNA in catalysis. The active-site Proton donor is Glu3. Lys61 acts as the Proton donor; for beta-elimination activity in catalysis. DNA contacts are provided by His103, Arg123, and Arg165. An FPG-type zinc finger spans residues Glu251–Pro285. The Proton donor; for delta-elimination activity role is filled by Arg275.

Belongs to the FPG family. In terms of assembly, monomer. Zn(2+) serves as cofactor.

It catalyses the reaction Hydrolysis of DNA containing ring-opened 7-methylguanine residues, releasing 2,6-diamino-4-hydroxy-5-(N-methyl)formamidopyrimidine.. It carries out the reaction 2'-deoxyribonucleotide-(2'-deoxyribose 5'-phosphate)-2'-deoxyribonucleotide-DNA = a 3'-end 2'-deoxyribonucleotide-(2,3-dehydro-2,3-deoxyribose 5'-phosphate)-DNA + a 5'-end 5'-phospho-2'-deoxyribonucleoside-DNA + H(+). In terms of biological role, involved in base excision repair of DNA damaged by oxidation or by mutagenic agents. Acts as a DNA glycosylase that recognizes and removes damaged bases. Has a preference for oxidized purines, such as 7,8-dihydro-8-oxoguanine (8-oxoG). Has AP (apurinic/apyrimidinic) lyase activity and introduces nicks in the DNA strand. Cleaves the DNA backbone by beta-delta elimination to generate a single-strand break at the site of the removed base with both 3'- and 5'-phosphates. The polypeptide is Formamidopyrimidine-DNA glycosylase (Parafrankia sp. (strain EAN1pec)).